Here is a 154-residue protein sequence, read N- to C-terminus: 8-oxo-dGTP diphosphatase (154 aa).

One can recognise a Nudix hydrolase domain in the interval Met1–Glu129. Positions 38, 53, 56, and 57 each coordinate Mg(2+). The Nudix box motif lies at Gly38–Gly59.

The protein belongs to the Nudix hydrolase family. As to quaternary structure, homotrimer. The cofactor is Mg(2+).

It carries out the reaction 8-oxo-dGTP + H2O = 8-oxo-dGMP + diphosphate + H(+). Its function is as follows. Involved in the DNA repair system to avoid A.T to G.C transversions. Degrades 8-oxo-dGTP to the monophosphate, but is also active on all of the nucleoside triphosphates. In Streptococcus pneumoniae serotype 4 (strain ATCC BAA-334 / TIGR4), this protein is 8-oxo-dGTP diphosphatase (mutX).